A 693-amino-acid chain; its full sequence is UvrABC system protein C (693 aa).

The GIY-YIG domain occupies 16 to 95; it reads DAPGVYRFRD…IKEFDPRFNV (80 aa). The UVR domain occupies 208 to 243; it reads GVFLRRLESEMAAASAELDFERAARVRDDINALRRV. A disordered region spans residues 656-693; the sequence is APSPDDATTEPGAVGEPGTADGAAADPDGRDAVVVPEG. Positions 672 to 693 are enriched in low complexity; sequence PGTADGAAADPDGRDAVVVPEG.

This sequence belongs to the UvrC family. Interacts with UvrB in an incision complex.

Its subcellular location is the cytoplasm. The UvrABC repair system catalyzes the recognition and processing of DNA lesions. UvrC both incises the 5' and 3' sides of the lesion. The N-terminal half is responsible for the 3' incision and the C-terminal half is responsible for the 5' incision. The polypeptide is UvrABC system protein C (Beutenbergia cavernae (strain ATCC BAA-8 / DSM 12333 / CCUG 43141 / JCM 11478 / NBRC 16432 / NCIMB 13614 / HKI 0122)).